A 258-amino-acid chain; its full sequence is UPF0246 protein Bpro_3713 (258 aa).

It belongs to the UPF0246 family.

This is UPF0246 protein Bpro_3713 from Polaromonas sp. (strain JS666 / ATCC BAA-500).